We begin with the raw amino-acid sequence, 549 residues long: Probable chaperonin-like protein PrmG (549 aa).

Belongs to the chaperonin (HSP60) family.

Probably plays an essential role in the productive folding of PrmA, and thus in the formation of the active PrmABCD complex. This chain is Probable chaperonin-like protein PrmG (prmG), found in Rhodococcus jostii (strain RHA1).